Consider the following 334-residue polypeptide: Inositol 2-dehydrogenase (334 aa).

The protein belongs to the Gfo/Idh/MocA family. Homotetramer.

The enzyme catalyses myo-inositol + NAD(+) = scyllo-inosose + NADH + H(+). Functionally, involved in the oxidation of myo-inositol (MI) to 2-keto-myo-inositol (2KMI or 2-inosose). This chain is Inositol 2-dehydrogenase, found in Cereibacter sphaeroides (strain ATCC 17029 / ATH 2.4.9) (Rhodobacter sphaeroides).